Consider the following 494-residue polypeptide: 2,3-bisphosphoglycerate-independent phosphoglycerate mutase (494 aa).

2 residues coordinate Mn(2+): Asp-12 and Ser-62. Ser-62 acts as the Phosphoserine intermediate in catalysis. Substrate is bound by residues His-121, 150–151, Arg-181, Arg-187, 252–255, and Lys-317; these read RD and RSDR. Residues Asp-384, His-388, Asp-425, His-426, and His-443 each contribute to the Mn(2+) site.

It belongs to the BPG-independent phosphoglycerate mutase family. Monomer. Requires Mn(2+) as cofactor.

It carries out the reaction (2R)-2-phosphoglycerate = (2R)-3-phosphoglycerate. The protein operates within carbohydrate degradation; glycolysis; pyruvate from D-glyceraldehyde 3-phosphate: step 3/5. In terms of biological role, catalyzes the interconversion of 2-phosphoglycerate and 3-phosphoglycerate. This is 2,3-bisphosphoglycerate-independent phosphoglycerate mutase from Anaplasma marginale (strain St. Maries).